Reading from the N-terminus, the 358-residue chain is Dynein axonemal assembly factor 10 (358 aa).

6 WD repeats span residues 64–106, 116–155, 163–206, 208–250, 258–298, and 320–358; these read EKSK…SPVY, NAIDGVGGLGIGDGAPEIVTGSRDGTVKVWDSRQKDTPVV, ETKR…LRWE, NIRN…PSKG, AHKS…QRSK, and LSTQPISSLDWSPDKQGLCVCSSFDQSVRVLIVTKLNTV.

As to quaternary structure, interacts with PIH1D1; the interaction associates DNAAF10 with the R2TP complex. Interacts with several dynein axonemal assembly factors.

It localises to the dynein axonemal particle. Functionally, key assembly factor specifically required for the stability of axonemal dynein heavy chains in cytoplasm. This Danio rerio (Zebrafish) protein is Dynein axonemal assembly factor 10 (dnaaf10).